The following is a 127-amino-acid chain: Large ribosomal subunit protein mL55 (127 aa).

A mitochondrion-targeting transit peptide spans 1 to 32 (MPLAILLSLLRHCGVRAALPTPRHLHTSPWRA). The residue at position 84 (Ser-84) is a Phosphoserine.

The protein belongs to the mitochondrion-specific ribosomal protein mL55 family. As to quaternary structure, component of the mitochondrial ribosome large subunit (39S) which comprises a 16S rRNA and about 50 distinct proteins.

The protein localises to the mitochondrion. This chain is Large ribosomal subunit protein mL55 (Mrpl55), found in Mus musculus (Mouse).